The sequence spans 177 residues: Ecotin (177 aa).

Residues methionine 1–glutamate 23 form the signal peptide. A disulfide bridge links cysteine 83 with cysteine 122.

This sequence belongs to the protease inhibitor I11 (ecotin) family. Homodimer.

It localises to the periplasm. General inhibitor of family S1 serine proteases. This is Ecotin from Prochlorococcus marinus (strain MIT 9313).